Consider the following 91-residue polypeptide: Non-specific lipid-transfer protein 1 (91 aa).

Disulfide bonds link cysteine 4-cysteine 51, cysteine 14-cysteine 28, cysteine 29-cysteine 74, and cysteine 49-cysteine 88.

Belongs to the plant LTP family. In terms of tissue distribution, detected in seeds (at protein level).

Its function is as follows. Plant non-specific lipid-transfer proteins transfer phospholipids as well as galactolipids across membranes. May play a role in wax or cutin deposition in the cell walls of expanding epidermal cells and certain secretory tissues. The chain is Non-specific lipid-transfer protein 1 from Carum carvi (Caraway).